The primary structure comprises 323 residues: Protease Do-like 5, chloroplastic (323 aa).

The transit peptide at 1–28 (MTMALASSKAFSSIFNTLSPINQSKFVL) directs the protein to the chloroplast. Residues 29-73 (ACSGSNHVDVIDRRRRIMIFGSSLALTSSLLGSNQQRLPMESAIA) constitute a thylakoid transit peptide. Residues histidine 147, aspartate 188, and serine 266 each act as charge relay system in the active site. The serine protease stretch occupies residues 186-283 (DNDLAVLKIE…YGHTIGVNTA (98 aa)).

Belongs to the peptidase S1C family.

Its subcellular location is the plastid. It localises to the chloroplast thylakoid lumen. In terms of biological role, probable serine protease. The chain is Protease Do-like 5, chloroplastic (DEGP5) from Arabidopsis thaliana (Mouse-ear cress).